The primary structure comprises 452 residues: Bifunctional protein GlmU (452 aa).

Positions 1 to 230 (MSRSRSAIIL…ADEVLGVNSR (230 aa)) are pyrophosphorylase. UDP-N-acetyl-alpha-D-glucosamine-binding positions include 10-13 (LAAG), K24, Q75, and 80-81 (GT). D105 lines the Mg(2+) pocket. Positions 141, 156, 171, and 228 each coordinate UDP-N-acetyl-alpha-D-glucosamine. N228 serves as a coordination point for Mg(2+). The linker stretch occupies residues 231–251 (ADLAEAEAAFQSRMRQSMMAD). The tract at residues 252–452 (GVTLIAPETV…ARKARKDSQT (201 aa)) is N-acetyltransferase. UDP-N-acetyl-alpha-D-glucosamine is bound by residues R317 and K335. H347 functions as the Proton acceptor in the catalytic mechanism. 2 residues coordinate UDP-N-acetyl-alpha-D-glucosamine: Y350 and N361. Residues A364, 370-371 (NY), S389, T407, and R424 each bind acetyl-CoA.

It in the N-terminal section; belongs to the N-acetylglucosamine-1-phosphate uridyltransferase family. In the C-terminal section; belongs to the transferase hexapeptide repeat family. In terms of assembly, homotrimer. Mg(2+) serves as cofactor.

The protein resides in the cytoplasm. It catalyses the reaction alpha-D-glucosamine 1-phosphate + acetyl-CoA = N-acetyl-alpha-D-glucosamine 1-phosphate + CoA + H(+). The enzyme catalyses N-acetyl-alpha-D-glucosamine 1-phosphate + UTP + H(+) = UDP-N-acetyl-alpha-D-glucosamine + diphosphate. The protein operates within nucleotide-sugar biosynthesis; UDP-N-acetyl-alpha-D-glucosamine biosynthesis; N-acetyl-alpha-D-glucosamine 1-phosphate from alpha-D-glucosamine 6-phosphate (route II): step 2/2. It participates in nucleotide-sugar biosynthesis; UDP-N-acetyl-alpha-D-glucosamine biosynthesis; UDP-N-acetyl-alpha-D-glucosamine from N-acetyl-alpha-D-glucosamine 1-phosphate: step 1/1. It functions in the pathway bacterial outer membrane biogenesis; LPS lipid A biosynthesis. In terms of biological role, catalyzes the last two sequential reactions in the de novo biosynthetic pathway for UDP-N-acetylglucosamine (UDP-GlcNAc). The C-terminal domain catalyzes the transfer of acetyl group from acetyl coenzyme A to glucosamine-1-phosphate (GlcN-1-P) to produce N-acetylglucosamine-1-phosphate (GlcNAc-1-P), which is converted into UDP-GlcNAc by the transfer of uridine 5-monophosphate (from uridine 5-triphosphate), a reaction catalyzed by the N-terminal domain. The polypeptide is Bifunctional protein GlmU (Maricaulis maris (strain MCS10) (Caulobacter maris)).